Consider the following 383-residue polypeptide: Spermidine/putrescine import ATP-binding protein PotA (383 aa).

The ABC transporter domain maps to 12-246 (IALRDISKVY…PSTPFVAGFI (235 aa)). Position 48–55 (48–55 (GPSGCGKT)) interacts with ATP.

It belongs to the ABC transporter superfamily. Spermidine/putrescine importer (TC 3.A.1.11.1) family. In terms of assembly, the complex is composed of two ATP-binding proteins (PotA), two transmembrane proteins (PotB and PotC) and a solute-binding protein (PotD).

The protein localises to the cell membrane. It catalyses the reaction ATP + H2O + polyamine-[polyamine-binding protein]Side 1 = ADP + phosphate + polyamineSide 2 + [polyamine-binding protein]Side 1.. Part of the ABC transporter complex PotABCD involved in spermidine/putrescine import. Responsible for energy coupling to the transport system. The sequence is that of Spermidine/putrescine import ATP-binding protein PotA from Acidothermus cellulolyticus (strain ATCC 43068 / DSM 8971 / 11B).